The primary structure comprises 239 residues: Endolytic peptidoglycan transglycosylase RlpA (239 aa).

A signal peptide spans 1 to 25; sequence MTLTRKTLFLLTAAFGTHSLQTASA. Residues 160 to 239 enclose the SPOR domain; sequence VAENKDIFID…GMVRAVLTAG (80 aa).

The protein belongs to the RlpA family.

Functionally, lytic transglycosylase with a strong preference for naked glycan strands that lack stem peptides. This is Endolytic peptidoglycan transglycosylase RlpA from Neisseria meningitidis serogroup B (strain ATCC BAA-335 / MC58).